The following is a 570-amino-acid chain: Glucan 1,3-beta-glucosidase 2 (570 aa).

Residues asparagine 91, asparagine 116, asparagine 121, asparagine 184, asparagine 203, and asparagine 248 are each glycosylated (N-linked (GlcNAc...) asparagine). The active-site Proton donor is glutamate 338. N-linked (GlcNAc...) asparagine glycosylation is present at asparagine 364. Catalysis depends on glutamate 439, which acts as the Nucleophile. Residues asparagine 525 and asparagine 552 are each glycosylated (N-linked (GlcNAc...) asparagine).

The protein belongs to the glycosyl hydrolase 5 (cellulase A) family.

The protein localises to the secreted. It carries out the reaction Successive hydrolysis of beta-D-glucose units from the non-reducing ends of (1-&gt;3)-beta-D-glucans, releasing alpha-glucose.. The protein is Glucan 1,3-beta-glucosidase 2 (exg2) of Schizosaccharomyces pombe (strain 972 / ATCC 24843) (Fission yeast).